Here is a 306-residue protein sequence, read N- to C-terminus: Homeobox protein Hox-C13a (306 aa).

Positions 236–295 (GRKKRVPYTKIQLKELEKEYAASKFITKDKRRRISATTNLSERQVTIWFQNRRVKEKKFV) form a DNA-binding region, homeobox.

Belongs to the Abd-B homeobox family.

The protein localises to the nucleus. In terms of biological role, sequence-specific transcription factor which is part of a developmental regulatory system that provides cells with specific positional identities on the anterior-posterior axis. In Danio rerio (Zebrafish), this protein is Homeobox protein Hox-C13a (hoxc13a).